Here is a 100-residue protein sequence, read N- to C-terminus: ATP phosphoribosyltransferase (100 aa).

Belongs to the ATP phosphoribosyltransferase family. Long subfamily. In terms of assembly, equilibrium between an active dimeric form, an inactive hexameric form and higher aggregates. Interconversion between the various forms is largely reversible and is influenced by the natural substrates and inhibitors of the enzyme. The cofactor is Mg(2+).

It is found in the cytoplasm. It catalyses the reaction 1-(5-phospho-beta-D-ribosyl)-ATP + diphosphate = 5-phospho-alpha-D-ribose 1-diphosphate + ATP. The protein operates within amino-acid biosynthesis; L-histidine biosynthesis; L-histidine from 5-phospho-alpha-D-ribose 1-diphosphate: step 1/9. With respect to regulation, feedback inhibited by histidine. Catalyzes the condensation of ATP and 5-phosphoribose 1-diphosphate to form N'-(5'-phosphoribosyl)-ATP (PR-ATP). Has a crucial role in the pathway because the rate of histidine biosynthesis seems to be controlled primarily by regulation of HisG enzymatic activity. The sequence is that of ATP phosphoribosyltransferase (hisG) from Klebsiella pneumoniae.